The primary structure comprises 435 residues: MIVNVIGAGLAGSEVTYNLGKRGIRVRLFEMRPKKMTEVHKTGYFAELVCSNSLKSEDITNAEGLLKAEMRLMGSITLEAAEKARVPSGKALAVDRNIFAKEVTEAVESLESVEIIREEVTEFDPEEGIWVVATGPATSDGLLPFLKKLLGDDFLFFFDAVSPIVTFESIDMERAFWGDRFGKGKDYINCPLTKEEYEEFWKALVEAEVIEMEDFDRKLLFERCQPIEEIARSGKDALRYGPLRPTGLVDPRTGKEPYAVIQLRREDKEGRFYSLVGFQTRLKWSEQKRVLRKIPCLRNAEIVRYGVMHRNVYINSPKLLDIFFRLKKHPNIFFAGQITGVEGYMESAASGIYVAYNVHRILKGLSPLKLPEETMMGALFSYIIEKVEGDLKPMYANFGLLPPLKVRVKDKFEKRKKLAERAIETMKKFLEENPW.

7–12 (GAGLAG) contributes to the FAD binding site.

This sequence belongs to the MnmG family. TrmFO subfamily. FAD serves as cofactor.

Its subcellular location is the cytoplasm. The enzyme catalyses uridine(54) in tRNA + (6R)-5,10-methylene-5,6,7,8-tetrahydrofolate + NADH + H(+) = 5-methyluridine(54) in tRNA + (6S)-5,6,7,8-tetrahydrofolate + NAD(+). It carries out the reaction uridine(54) in tRNA + (6R)-5,10-methylene-5,6,7,8-tetrahydrofolate + NADPH + H(+) = 5-methyluridine(54) in tRNA + (6S)-5,6,7,8-tetrahydrofolate + NADP(+). Functionally, catalyzes the folate-dependent formation of 5-methyl-uridine at position 54 (M-5-U54) in all tRNAs. In Thermotoga sp. (strain RQ2), this protein is Methylenetetrahydrofolate--tRNA-(uracil-5-)-methyltransferase TrmFO.